Here is a 145-residue protein sequence, read N- to C-terminus: 3-dehydroquinate dehydratase (145 aa).

Tyr24 serves as the catalytic Proton acceptor. Residues Asn76, His82, and Asp89 each coordinate substrate. His102 functions as the Proton donor in the catalytic mechanism. Residues 103 to 104 (VS) and Arg113 each bind substrate.

This sequence belongs to the type-II 3-dehydroquinase family. Homododecamer.

The catalysed reaction is 3-dehydroquinate = 3-dehydroshikimate + H2O. The protein operates within metabolic intermediate biosynthesis; chorismate biosynthesis; chorismate from D-erythrose 4-phosphate and phosphoenolpyruvate: step 3/7. Functionally, catalyzes a trans-dehydration via an enolate intermediate. This is 3-dehydroquinate dehydratase from Herminiimonas arsenicoxydans.